The chain runs to 149 residues: MTKESKPDRLRQMGALNPKPESVRAPWFREAGFFDPLDLVQVKYEMLRHAREDGTNKADAAALFGLSRQTYYQAEAAFERDGMSGLLPRTRGPKSAHKLTGEVMRLVEEHLDANGQLQARSLADLVHSRLGISVHPRSIERAVARKKKR.

Residues 1-11 (MTKESKPDRLR) are compositionally biased toward basic and acidic residues. The tract at residues 1 to 20 (MTKESKPDRLRQMGALNPKP) is disordered.

This is an uncharacterized protein from Sinorhizobium fredii (strain NBRC 101917 / NGR234).